A 145-amino-acid polypeptide reads, in one-letter code: Probable inactive ribonuclease-like protein 12 (145 aa).

Positions 1 to 19 (MVLMVVVFLLLLFWENELT) are cleaved as a signal peptide.

It belongs to the pancreatic ribonuclease family.

Its subcellular location is the secreted. Does not exhibit any ribonuclease activity. The protein is Probable inactive ribonuclease-like protein 12 (Rnase12) of Mus musculus (Mouse).